Consider the following 2564-residue polypeptide: Highly reducing polyketide synthase 40 (2564 aa).

The Ketosynthase family 3 (KS3) domain maps to 8–432 (PEPIAIIGMS…GTNAHVIVDR (425 aa)). Catalysis depends on for beta-ketoacyl synthase activity residues C181, H317, and H358. A disordered region spans residues 435–482 (EHNHSNGTNGTNGTHHHNGTNGSNGNGTNGTNGTNGTDGFHDTESISD). Residues 439 to 455 (SNGTNGTNGTHHHNGTN) show a composition bias toward low complexity. Residues 473–482 (GFHDTESISD) show a composition bias toward basic and acidic residues. The segment at 580 to 914 (YVFGGQGAQY…SAAENMLRTL (335 aa)) is malonyl-CoA:ACP transacylase (MAT) domain. The N-terminal hotdog fold stretch occupies residues 973–1113 (HELLGNLSAD…GRIRAVVDQG (141 aa)). The interval 973–1280 (HELLGNLSAD…GLRTAQLPSD (308 aa)) is dehydratase (DH) domain. The PKS/mFAS DH domain occupies 973–1283 (HELLGNLSAD…TAQLPSDVVN (311 aa)). The active-site Proton acceptor; for dehydratase activity is H1005. The tract at residues 1130 to 1283 (AASVPHHITS…TAQLPSDVVN (154 aa)) is C-terminal hotdog fold. D1199 functions as the Proton donor; for dehydratase activity in the catalytic mechanism. Residues 1451–1556 (LEVGGGTASA…RQLLRPGGTL (106 aa)) form a methyltransferase (CMet) domain region. Residues 1854–2167 (GLLETFRWVD…AGKHMGKVIL (314 aa)) are enoyl reductase (ER) domain. Positions 2191–2370 (ATYLLVGGFG…SFAIDVGVVS (180 aa)) are ketoreductase (KR) domain. In terms of domain architecture, Carrier spans 2472-2549 (EALDAVGQAV…ELIHLVAGKS (78 aa)). The residue at position 2509 (S2509) is an O-(pantetheine 4'-phosphoryl)serine.

The protein operates within secondary metabolite biosynthesis. In terms of biological role, highly reducing polyketide synthase; part of the gene cluster that mediates the biosynthesis of the lipopeptides W493 A and B. W493 A and B consist of six amino acid residues D-allo-thr, L-Ala, D-Ala, L-Gln, D-Tyr, and L-Val/L-Ile linked to a 3-hydroxy-4-methyltetradecanoic acid polyketide chain. The biosynthesis starts with formation of the linear polyketide chain by the highly reducing polyketide synthase PKS40. The gene cluster contains a putative acyl-CoA ligase (FPSE_09184) for formation of a CoA thioester polyketide. The thiol bond could be hydrolyzed by the putative thioesterase (FPSE_09186) and then accepted by the first T domain in module 1 of NRPS32. The second T domain is responsible for accepting a threonine, which is adenylated by the A domain and epimerized to the D-allo-threonine formed by the E domain. The five successive modules incorporate Ala, Ala, Gln, Tyr, and Val/Ile into the final product, which is released by cyclization. The polypeptide is Highly reducing polyketide synthase 40 (Fusarium pseudograminearum (strain CS3096) (Wheat and barley crown-rot fungus)).